Consider the following 373-residue polypeptide: Chaperone protein DnaJ (373 aa).

The 65-residue stretch at 4–68 (NYYQILGVSK…QKRAAYDRLG (65 aa)) folds into the J domain. Residues 136–214 (GIEKNISFSS…CHGMGRYHKQ (79 aa)) form a CR-type zinc finger. The Zn(2+) site is built by Cys-149, Cys-152, Cys-166, Cys-169, Cys-188, Cys-191, Cys-202, and Cys-205. CXXCXGXG motif repeat units lie at residues 149-156 (CDTCHGSG), 166-173 (CDACSGVG), 188-195 (CHKCQGNG), and 202-209 (CKKCHGMG).

Belongs to the DnaJ family. Homodimer. It depends on Zn(2+) as a cofactor.

Its subcellular location is the cytoplasm. Participates actively in the response to hyperosmotic and heat shock by preventing the aggregation of stress-denatured proteins and by disaggregating proteins, also in an autonomous, DnaK-independent fashion. Unfolded proteins bind initially to DnaJ; upon interaction with the DnaJ-bound protein, DnaK hydrolyzes its bound ATP, resulting in the formation of a stable complex. GrpE releases ADP from DnaK; ATP binding to DnaK triggers the release of the substrate protein, thus completing the reaction cycle. Several rounds of ATP-dependent interactions between DnaJ, DnaK and GrpE are required for fully efficient folding. Also involved, together with DnaK and GrpE, in the DNA replication of plasmids through activation of initiation proteins. This is Chaperone protein DnaJ from Rickettsia africae (strain ESF-5).